A 198-amino-acid chain; its full sequence is MQFEVKDLINKIKKDGLEEAEKLANEIILNAKRDAEAIVLKAESDAKDLKMQAEAEANEYKRYSLEASRQAVRDLIIGTEKNIKSLFKTALKDSVSRVYDDNFLRDLIIKVVDIWSKNDKIDIMLNESDFSNLLSVLRAKIGNRLDDAIEIKPFKGISKGFTIQQRDGNLYYDFTSETVADILFEYLNPRFKEVIKLI.

The protein belongs to the V-ATPase E subunit family.

Produces ATP from ADP in the presence of a proton gradient across the membrane. This chain is V-type proton ATPase subunit E, found in Borrelia turicatae (strain 91E135).